The primary structure comprises 476 residues: Protein transport protein Sec61 subunit alpha isoform 2 (476 aa).

The Cytoplasmic segment spans residues 1 to 32 (MGIKFLEVIKPFCAVLPEIQKPERKIQFREKV). A helical transmembrane segment spans residues 33-53 (LWTAITLFIFLVCCQIPLFGI). At 54–75 (MSSDSADPFYWMRVILASNRGT) the chain is on the lumenal side. A helical transmembrane segment spans residues 76–96 (LMELGISPIVTSGLIMQLLAG). At 97 to 117 (AKIIEVGDTPKDRALFNGAQK) the chain is on the cytoplasmic side. Residues 118 to 138 (LFGMIITIGQAIVYVMTGMYG) form a helical membrane-spanning segment. The Lumenal segment spans residues 139–144 (DPAEMG). The chain crosses the membrane as a helical span at residues 145–165 (AGICLLIIIQLFVAGLIVLLL). The Cytoplasmic portion of the chain corresponds to 166–172 (DELLQKG). The helical transmembrane segment at 173–193 (YGLGSGISLFIATNICETIVW) threads the bilayer. The Lumenal segment spans residues 194–240 (KASSPTTINTGRGTEFEGAVIALFHLLATRTDKVRALREAFYRQNLP). The helical transmembrane segment at 241–261 (NLMNLIATVFVFAVVIYFQGF) threads the bilayer. Topologically, residues 262-288 (RVDLPIKSARYRGQYSSYPIKLFYTSN) are cytoplasmic. A helical transmembrane segment spans residues 289 to 309 (IPIILQSALVSNLYVISQMLS). Residues 310–353 (VRFSGNFLVNLLGQWADVSGGGPARSYPVGGLCYYLSPPESMGA) are Lumenal-facing. Residues 354–374 (ILEDPVHVVVYIIFMLGSCAF) traverse the membrane as a helical segment. The Cytoplasmic portion of the chain corresponds to 375-420 (FSKTWIEVSGSSAKDVAKQLKEQQMVMRGHRDTSMVHELNRYIPTA). 2 consecutive transmembrane segments (helical) span residues 421–441 (AAFG…LGAI) and 442–462 (GSGT…EIFV). The Cytoplasmic portion of the chain corresponds to 463–476 (KEQAEVGGMGALFF).

It belongs to the SecY/SEC61-alpha family. As to quaternary structure, the SEC61 channel-forming translocon complex consists of channel-forming core components SEC61A1, SEC61B and SEC61G and different auxiliary components such as SEC62 and SEC63.

The protein resides in the endoplasmic reticulum membrane. Its function is as follows. Component of SEC61 channel-forming translocon complex that mediates transport of signal peptide-containing precursor polypeptides across the endoplasmic reticulum (ER). Forms a ribosome receptor and a gated pore in the ER membrane, both functions required for cotranslational translocation of nascent polypeptides. The polypeptide is Protein transport protein Sec61 subunit alpha isoform 2 (SEC61A2) (Pongo abelii (Sumatran orangutan)).